The primary structure comprises 155 residues: Large ribosomal subunit protein uL11 (155 aa).

This sequence belongs to the universal ribosomal protein uL11 family. As to quaternary structure, part of the ribosomal stalk of the 50S ribosomal subunit. Interacts with L10 and the large rRNA to form the base of the stalk. L10 forms an elongated spine to which L12 dimers bind in a sequential fashion forming a multimeric L10(L12)X complex.

Forms part of the ribosomal stalk which helps the ribosome interact with GTP-bound translation factors. This chain is Large ribosomal subunit protein uL11, found in Picrophilus torridus (strain ATCC 700027 / DSM 9790 / JCM 10055 / NBRC 100828 / KAW 2/3).